The sequence spans 201 residues: Retinol-binding protein 4 (201 aa).

Positions 1–18 are cleaved as a signal peptide; it reads MEWVWALVLLAALGGGSA. 3 disulfides stabilise this stretch: cysteine 22–cysteine 178, cysteine 88–cysteine 192, and cysteine 138–cysteine 147. Glutamine 116 lines the substrate pocket. At arginine 139 the chain carries Omega-N-methylarginine.

It belongs to the calycin superfamily. Lipocalin family. As to quaternary structure, interacts with TTR. Interaction with TTR prevents its loss by filtration through the kidney glomeruli. Interacts with STRA6.

It localises to the secreted. In terms of biological role, retinol-binding protein that mediates retinol transport in blood plasma. Delivers retinol from the liver stores to the peripheral tissues. Transfers the bound all-trans retinol to STRA6, that then facilitates retinol transport across the cell membrane. The polypeptide is Retinol-binding protein 4 (Rbp4) (Mus musculus (Mouse)).